Reading from the N-terminus, the 307-residue chain is uncharacterized protein (307 aa).

This is an uncharacterized protein from Caenorhabditis elegans.